Reading from the N-terminus, the 268-residue chain is Undecaprenyl-diphosphatase (268 aa).

7 helical membrane-spanning segments follow: residues 47–67 (FTIL…FAKL), 83–103 (FVIG…LAGG), 109–129 (LFNP…LLWV), 144–164 (FPLP…IPGV), 184–204 (AAEF…VYDL), 217–237 (LIVA…VKSF), and 246–266 (FTLF…ALAL).

It belongs to the UppP family.

The protein resides in the cell inner membrane. The catalysed reaction is di-trans,octa-cis-undecaprenyl diphosphate + H2O = di-trans,octa-cis-undecaprenyl phosphate + phosphate + H(+). Catalyzes the dephosphorylation of undecaprenyl diphosphate (UPP). Confers resistance to bacitracin. The chain is Undecaprenyl-diphosphatase from Rhodopseudomonas palustris (strain BisB18).